The chain runs to 218 residues: Pyridoxine/pyridoxamine 5'-phosphate oxidase (218 aa).

Substrate contacts are provided by residues 14–17 and lysine 72; that span reads RREY. FMN-binding positions include 67-72, 82-83, arginine 88, lysine 89, and glutamine 111; these read RIVLLK and YT. Residues tyrosine 129, arginine 133, and serine 137 each contribute to the substrate site. Residues 146-147 and tryptophan 191 each bind FMN; that span reads QS. A substrate-binding site is contributed by 197-199; sequence RLH. Arginine 201 is an FMN binding site.

It belongs to the pyridoxamine 5'-phosphate oxidase family. In terms of assembly, homodimer. FMN is required as a cofactor.

The enzyme catalyses pyridoxamine 5'-phosphate + O2 + H2O = pyridoxal 5'-phosphate + H2O2 + NH4(+). It carries out the reaction pyridoxine 5'-phosphate + O2 = pyridoxal 5'-phosphate + H2O2. It participates in cofactor metabolism; pyridoxal 5'-phosphate salvage; pyridoxal 5'-phosphate from pyridoxamine 5'-phosphate: step 1/1. Its pathway is cofactor metabolism; pyridoxal 5'-phosphate salvage; pyridoxal 5'-phosphate from pyridoxine 5'-phosphate: step 1/1. Catalyzes the oxidation of either pyridoxine 5'-phosphate (PNP) or pyridoxamine 5'-phosphate (PMP) into pyridoxal 5'-phosphate (PLP). The polypeptide is Pyridoxine/pyridoxamine 5'-phosphate oxidase (Escherichia fergusonii (strain ATCC 35469 / DSM 13698 / CCUG 18766 / IAM 14443 / JCM 21226 / LMG 7866 / NBRC 102419 / NCTC 12128 / CDC 0568-73)).